Reading from the N-terminus, the 92-residue chain is Neuropeptide ShK-like2 (92 aa).

The N-terminal stretch at 1 to 23 is a signal peptide; it reads MTTIRCVLFAVLLFAYCALLIKA. Positions 24–51 are excised as a propeptide; the sequence is RSIDAEAEKTWQEEETKTVAEKSPLKKR. Cystine bridges form between Cys-53/Cys-92, Cys-61/Cys-85, and Cys-70/Cys-89.

As to expression, transcripts are first expressed mostly in the endoderm (with rare ectodermal cells) in the late planulae. They are mostly expressed in endodermal ganglion cells in the body column and tentacles in primary polyps, as well as in a small number of ectodermal sensory neurons in tentacles and body wall. They are not expressed in nematocytes. In terms of tissue distribution, transcripts are predominantly expressed in ectodermal sensory neurons in early and late planulae. They are expressed in endodermal ganglion cells in the body column and tentacles in primary polyps, as well as in a small number of ectodermal neurons in pharynx. They are not expressed in nematocytes.

Its function is as follows. In vivo, this neuropeptide induces contraction paralysis followed by death (within 2 hours) on 4 zebrafish larvae on the 15 tested. Also induces body contraction in Nematostella 11-dpf polyps. In Nematostella vectensis (Starlet sea anemone), this protein is Neuropeptide ShK-like2.